Reading from the N-terminus, the 58-residue chain is Dortoxin (58 aa).

The region spanning 3–58 (VPGNYPLDKDGNTYTCLKLGENKDCQKVCKLHGVQYGYCYAFECWCKEYLDDKDSV) is the LCN-type CS-alpha/beta domain. Cystine bridges form between Cys-18-Cys-41, Cys-27-Cys-46, and Cys-31-Cys-48.

Expressed by the venom gland.

It localises to the secreted. In terms of biological role, binds to sodium channels (Nav) and affects the channel activation process. In mice, causes hyperactivity that persists until death. In Parabuthus transvaalicus (Transvaal thick-tailed scorpion), this protein is Dortoxin.